The following is a 257-amino-acid chain: Hydroxyacylglutathione hydrolase (257 aa).

Zn(2+) is bound by residues His-54, His-56, Asp-58, His-59, His-113, Asp-137, and His-175.

Belongs to the metallo-beta-lactamase superfamily. Glyoxalase II family. As to quaternary structure, monomer. Zn(2+) is required as a cofactor.

It carries out the reaction an S-(2-hydroxyacyl)glutathione + H2O = a 2-hydroxy carboxylate + glutathione + H(+). Its pathway is secondary metabolite metabolism; methylglyoxal degradation; (R)-lactate from methylglyoxal: step 2/2. Its function is as follows. Thiolesterase that catalyzes the hydrolysis of S-D-lactoyl-glutathione to form glutathione and D-lactic acid. This Microcystis aeruginosa (strain NIES-843 / IAM M-2473) protein is Hydroxyacylglutathione hydrolase.